The following is a 133-amino-acid chain: Large ribosomal subunit protein bL17 (133 aa).

The protein belongs to the bacterial ribosomal protein bL17 family. As to quaternary structure, part of the 50S ribosomal subunit. Contacts protein L32.

The protein is Large ribosomal subunit protein bL17 of Thermodesulfovibrio yellowstonii (strain ATCC 51303 / DSM 11347 / YP87).